The sequence spans 269 residues: Probable ribosomal RNA small subunit methyltransferase A (269 aa).

S-adenosyl-L-methionine-binding residues include His-19, Leu-21, Gly-46, Glu-67, Asp-92, and Asn-107.

Belongs to the class I-like SAM-binding methyltransferase superfamily. rRNA adenine N(6)-methyltransferase family. RsmA subfamily.

The protein resides in the cytoplasm. In terms of biological role, specifically dimethylates two adjacent adenosines in the loop of a conserved hairpin near the 3'-end of 16S rRNA in the 30S particle. May play a critical role in biogenesis of 30S subunits. The protein is Probable ribosomal RNA small subunit methyltransferase A of Methanosarcina acetivorans (strain ATCC 35395 / DSM 2834 / JCM 12185 / C2A).